A 256-amino-acid polypeptide reads, in one-letter code: Small ribosomal subunit protein eS1 (256 aa).

The segment covering 1 to 18 (MAVGKNKRLSKGKKGLKK) has biased composition (basic residues). Positions 1–20 (MAVGKNKRLSKGKKGLKKRT) are disordered. Ala-2 bears the N-acetylalanine; partial mark.

This sequence belongs to the eukaryotic ribosomal protein eS1 family. In terms of assembly, component of the small ribosomal subunit. Mature ribosomes consist of a small (40S) and a large (60S) subunit. The 40S subunit contains about 33 different proteins and 1 molecule of RNA (18S). The 60S subunit contains about 49 different proteins and 3 molecules of RNA (25S, 5.8S and 5S).

It is found in the cytoplasm. This chain is Small ribosomal subunit protein eS1 (rps1), found in Talaromyces stipitatus (strain ATCC 10500 / CBS 375.48 / QM 6759 / NRRL 1006) (Penicillium stipitatum).